We begin with the raw amino-acid sequence, 74 residues long: Conotoxin VxVIA (74 aa).

Residues 1–22 (MKLTCVLIIAVLFLTAYQLATA) form the signal peptide. Positions 23–47 (ASHAKGKQKHRALRPADKHFRFTKR) are excised as a propeptide. Cystine bridges form between Cys48–Cys62, Cys55–Cys66, and Cys61–Cys73.

As to expression, expressed by the venom duct.

The protein localises to the secreted. Its function is as follows. When injected intracranially in mice, induces a series of symptoms such as quivering, climbing, scratching, barrel rolling and paralysis of limbs. Unexpectedly, no effect is observed on ionic currents when tested on locust DUM neuron. The polypeptide is Conotoxin VxVIA (Conus vexillum (Flag cone)).